The primary structure comprises 158 residues: UPAR/Ly6 domain-containing protein crim (158 aa).

An N-terminal signal peptide occupies residues 1–22; the sequence is MHYHTNLIAALLLAALIHEGSA. The Extracellular segment spans residues 23–136; sequence IWCYRCTSAT…FCFLDHRCNG (114 aa). N-linked (GlcNAc...) asparagine glycosylation occurs at Asn-107. Asn-135 is lipidated: GPI-anchor amidated asparagine. A propeptide spans 136–158 (removed in mature form); it reads GASGLQTSAVIGLLTLIPALLLR. A helical membrane pass occupies residues 137–157; sequence ASGLQTSAVIGLLTLIPALLL. Residue Arg-158 is a topological domain, cytoplasmic.

Belongs to the quiver family.

The protein localises to the membrane. Functionally, required for septate junction assembly possibly by organizing the preassembly and transport of septate junction proteins. Involved in epithelial cell septate junction-mediated paracellular barrier functions of trachea, hindgut and salivary gland. The protein is UPAR/Ly6 domain-containing protein crim of Drosophila melanogaster (Fruit fly).